A 154-amino-acid polypeptide reads, in one-letter code: MPHPLLPDLETLASATATGKGYKLCCVQVFTHLIPMTIQVQIRRKDGSDVSLDDCAHFSASMDEALEASQLFTEAYVLEISSPGIGDQLHSDQDFLTFRGFPVEISFRDDDSDLHQAGLLHKRSDEHVHINIKGRIQRIPRKAVTCVRLTNPTG.

This sequence belongs to the RimP family.

Its subcellular location is the cytoplasm. Functionally, required for maturation of 30S ribosomal subunits. The protein is Ribosome maturation factor RimP of Prochlorococcus marinus (strain MIT 9303).